A 243-amino-acid polypeptide reads, in one-letter code: uncharacterized protein (243 aa).

A disordered region spans residues 71–120; it reads KRTNVSQRNRKKGIKNNRPHKDINSSPDWGNAHRGTDWQSEKANGMNRAK. A compositionally biased stretch (basic residues) spans 78-88; it reads RNRKKGIKNNR. The residue at position 96 (Ser-96) is a Phosphoserine.

This is an uncharacterized protein from Saccharomyces cerevisiae (strain ATCC 204508 / S288c) (Baker's yeast).